The primary structure comprises 317 residues: Tetraspanin-15 (317 aa).

The tract at residues 1–43 (MADNAQVVPVEEPAATATATATATATTEPEAKSSDQMESQSDN) is disordered. At 1-60 (MADNAQVVPVEEPAATATATATATATTEPEAKSSDQMESQSDNKPPMGTLMALVNILAAG) the chain is on the cytoplasmic side. Over residues 7–28 (VVPVEEPAATATATATATATTE) the composition is skewed to low complexity. A helical transmembrane segment spans residues 61–81 (VLPIFTFVLSLTLLGYAVWLL). The Extracellular portion of the chain corresponds to 82-96 (YMRSYDCEDILGLPR). A helical transmembrane segment spans residues 97 to 117 (VQTLASVGLLAVFVVSNAALF). Topologically, residues 118 to 126 (LRRKFPMPA) are cytoplasmic. A helical transmembrane segment spans residues 127 to 147 (LVVMVVVLLLMLFIGLAYAGV). At 148-287 (NEMQSRRFPA…IRSVRRKWWQ (140 aa)) the chain is on the extracellular side. N-linked (GlcNAc...) asparagine glycosylation is present at Asn224. Residues 288–308 (LGIFLIVISILLLMSHLLIFL) form a helical membrane-spanning segment. Residues 309-317 (ATFWERFKG) are Cytoplasmic-facing.

Belongs to the tetraspanin (TM4SF) family.

It localises to the membrane. In terms of biological role, may be involved in the regulation of cell differentiation. The polypeptide is Tetraspanin-15 (TET15) (Arabidopsis thaliana (Mouse-ear cress)).